The chain runs to 528 residues: Phosphoenolpyruvate carboxykinase (ATP) (528 aa).

Substrate-binding residues include Arg56, Tyr192, and Lys198. ATP is bound by residues Lys198, His217, and 233-241 (GLSGTGKTT). Residues Lys198 and His217 each coordinate Mn(2+). Residue Asp254 coordinates Mn(2+). Residues Glu282, Arg319, and Thr444 each coordinate ATP. Arg319 serves as a coordination point for substrate.

The protein belongs to the phosphoenolpyruvate carboxykinase (ATP) family. The cofactor is Mn(2+).

Its subcellular location is the cytoplasm. The catalysed reaction is oxaloacetate + ATP = phosphoenolpyruvate + ADP + CO2. The protein operates within carbohydrate biosynthesis; gluconeogenesis. Functionally, involved in the gluconeogenesis. Catalyzes the conversion of oxaloacetate (OAA) to phosphoenolpyruvate (PEP) through direct phosphoryl transfer between the nucleoside triphosphate and OAA. In Geobacillus thermodenitrificans (strain NG80-2), this protein is Phosphoenolpyruvate carboxykinase (ATP).